Reading from the N-terminus, the 863-residue chain is Oleate activated transcription factor 3 (863 aa).

The segment at residues 19–47 (CTNCKKRKSKCDRTKPCGTCVRLGDVDSC) is a DNA-binding region (zn(2)-C6 fungal-type). Residues 52 to 63 (DSSGQPESSPSL) show a composition bias toward polar residues. Residues 52-99 (DSSGQPESSPSLNDADPLRKQSTPAERISPGFIKKRRSSQTRQDEDHW) are disordered.

The protein belongs to the OAF3 family.

It localises to the cytoplasm. The protein resides in the nucleus. Its subcellular location is the mitochondrion. Functionally, transcriptional inhibitor with a significantly increased number of target genes in response to oleate. This is Oleate activated transcription factor 3 (OAF3) from Saccharomyces cerevisiae (strain YJM789) (Baker's yeast).